Consider the following 444-residue polypeptide: NADH-ubiquinone oxidoreductase chain 4 (444 aa).

The next 13 membrane-spanning stretches (helical) occupy residues Tyr4 to Val24, Ile28 to Ile48, Gly53 to Ile73, Asn87 to Leu107, Leu109 to Gly129, Val141 to Ile161, Leu173 to Val193, Pro212 to Phe232, Phe245 to Phe265, Ser272 to Trp294, Gly306 to Gly326, Leu330 to Leu350, and Ile373 to Val393.

It belongs to the complex I subunit 4 family.

The protein resides in the mitochondrion membrane. The enzyme catalyses a ubiquinone + NADH + 5 H(+)(in) = a ubiquinol + NAD(+) + 4 H(+)(out). Its function is as follows. Core subunit of the mitochondrial membrane respiratory chain NADH dehydrogenase (Complex I) that is believed to belong to the minimal assembly required for catalysis. Complex I functions in the transfer of electrons from NADH to the respiratory chain. The immediate electron acceptor for the enzyme is believed to be ubiquinone. This is NADH-ubiquinone oxidoreductase chain 4 (ND4) from Locusta migratoria (Migratory locust).